Consider the following 83-residue polypeptide: MAHKKSGGVAKNGRDSLPKYLGVKVGDGQIVKAGNILVRQRGTRFYPGKNVGMGRDFTLFALKDGRVKFETKNNKKYVSVYEE.

The protein belongs to the bacterial ribosomal protein bL27 family.

In Thermotoga maritima (strain ATCC 43589 / DSM 3109 / JCM 10099 / NBRC 100826 / MSB8), this protein is Large ribosomal subunit protein bL27 (rpmA).